Reading from the N-terminus, the 368-residue chain is Queuine tRNA-ribosyltransferase (368 aa).

Asp89 serves as the catalytic Proton acceptor. Substrate is bound by residues 89 to 93, Asp143, Gln187, and Gly214; that span reads DSGGF. Asp264 (nucleophile) is an active-site residue. The tract at residues 269 to 273 is RNA binding; important for wobble base 34 recognition; the sequence is TRNAR. 4 residues coordinate Zn(2+): Cys302, Cys304, Cys307, and His333.

It belongs to the queuine tRNA-ribosyltransferase family. In terms of assembly, homodimer. Within each dimer, one monomer is responsible for RNA recognition and catalysis, while the other monomer binds to the replacement base PreQ1. The cofactor is Zn(2+).

It carries out the reaction 7-aminomethyl-7-carbaguanine + guanosine(34) in tRNA = 7-aminomethyl-7-carbaguanosine(34) in tRNA + guanine. The protein operates within tRNA modification; tRNA-queuosine biosynthesis. In terms of biological role, catalyzes the base-exchange of a guanine (G) residue with the queuine precursor 7-aminomethyl-7-deazaguanine (PreQ1) at position 34 (anticodon wobble position) in tRNAs with GU(N) anticodons (tRNA-Asp, -Asn, -His and -Tyr). Catalysis occurs through a double-displacement mechanism. The nucleophile active site attacks the C1' of nucleotide 34 to detach the guanine base from the RNA, forming a covalent enzyme-RNA intermediate. The proton acceptor active site deprotonates the incoming PreQ1, allowing a nucleophilic attack on the C1' of the ribose to form the product. After dissociation, two additional enzymatic reactions on the tRNA convert PreQ1 to queuine (Q), resulting in the hypermodified nucleoside queuosine (7-(((4,5-cis-dihydroxy-2-cyclopenten-1-yl)amino)methyl)-7-deazaguanosine). This is Queuine tRNA-ribosyltransferase from Blochmanniella pennsylvanica (strain BPEN).